Reading from the N-terminus, the 798-residue chain is MEQRWGLLRRVQQWSPRPSQTIYRRVEGPQLEHLEEEDREEGAELPAQFCPMELKGPEHLGSCPGRSIPIPWAAAGRKAAPYLVLITLLIFTGAFLLGYVAFRGSCQACGDSVLVVDEDVNPEDSGRTTLYWSDLQAMFLRFLGEGRMEDTIRLTSLRERVAGSARMATLVQDILDKLSRQKLDHVWTDTHYVGLQFPDPAHANTLHWVDADGSVQEQLPLEDPEVYCPYSATGNATGKLVYAHYGRSEDLQDLKAKGVELAGSLLLVRVGITSFAQKVAVAQDFGAQGVLIYPDPSDFSQDPHKPGLSSHQAVYGHVHLGTGDPYTPGFPSFNQTQFPPVESSGLPSIPAQPISADIADQLLRKLTGPVAPQEWKGHLSGSPYRLGPGPDLRLVVNNHRVSTPISNIFACIEGFAEPDHYVVIGAQRDAWGPGAAKSAVGTAILLELVRTFSSMVSNGFRPRRSLLFISWDGGDFGSVGATEWLEGYLSVLHLKAVVYVSLDNSVLGDGKFHAKTSPLLVSLIENILKQVDSPNHSGQTLYEQVALTHPSWDAEVIQPLPMDSSAYSFTAFAGVPAVEFSFMEDDRVYPFLHTKEDTYENLHKMLRGRLPAVVQAVAQLAGQLLIRLSHDHLLPLDFGRYGDVVLRHIGNLNEFSGDLKERGLTLQWVYSARGDYIRAAEKLRKEIYSSERNDERLMRMYNVRIMRVEFYFLSQYVSPADSPFRHIFLGQGDHTLGALVDHLRMLRADGSGAASSRLTAGLGFQESRFRRQLALLTWTLQGAANALSGDVWNIDNNF.

The Cytoplasmic segment spans residues 1 to 81; sequence MEQRWGLLRR…WAAAGRKAAP (81 aa). The Endocytosis signal signature appears at 23-26; sequence YRRV. The chain crosses the membrane as a helical; Signal-anchor for type II membrane protein span at residues 82 to 102; that stretch reads YLVLITLLIFTGAFLLGYVAF. The Extracellular segment spans residues 103-798; that stretch reads RGSCQACGDS…GDVWNIDNNF (696 aa). N-linked (GlcNAc...) asparagine glycans are attached at residues asparagine 235, asparagine 334, and asparagine 535.

This sequence belongs to the peptidase M28 family. M28B subfamily. In terms of tissue distribution, predominantly expressed in liver. Also expressed in kidney, spleen, brain, lung, heart and muscle with very low expression in kidney, muscle and heart.

The protein resides in the cell membrane. The protein localises to the cytoplasm. In terms of biological role, mediates cellular uptake of transferrin-bound iron in a non-iron dependent manner. May be involved in iron metabolism, hepatocyte function and erythrocyte differentiation. The sequence is that of Transferrin receptor protein 2 (Tfr2) from Mus musculus (Mouse).